The chain runs to 267 residues: Trehalose 2-sulfotransferase (267 aa).

Alpha,alpha-trehalose-binding positions include Gln-14, 33-39, Pro-48, and Trp-53; that span reads EPQEFFQ. Glu-36 functions as the Proton acceptor in the catalytic mechanism.

Belongs to the Stf0 sulfotransferase family. In terms of assembly, homodimer.

The catalysed reaction is alpha,alpha-trehalose + 3'-phosphoadenylyl sulfate = 2-O-sulfo-alpha,alpha-trehalose + adenosine 3',5'-bisphosphate + H(+). Its pathway is glycolipid metabolism. Catalyzes the sulfuryl group transfer from 3'-phosphoadenosine-5'-phosphosulfate (PAPS) to trehalose, leading to trehalose-2-sulfate (T2S). The sulfation of trehalose is the first step in the biosynthesis of sulfolipid-1 (SL-1), a major cell wall glycolipid and the most abundant sulfated metabolite found in Mycobacterium tuberculosis, that is a potential virulence factor thought to mediate host-pathogen interactions. This chain is Trehalose 2-sulfotransferase, found in Mycobacterium tuberculosis (strain ATCC 35801 / TMC 107 / Erdman).